We begin with the raw amino-acid sequence, 262 residues long: 5-methyltetrahydrofolate:corrinoid/iron-sulfur protein co-methyltransferase (262 aa).

Residues 1-246 form the Pterin-binding domain; sequence MLIIGERING…ETAATAEILL (246 aa). Asn-96 and Asp-160 together coordinate (6S)-5-methyl-5,6,7,8-tetrahydrofolate. Position 184 (Lys-184) interacts with Ca(2+). Asn-199, Gln-202, and Arg-207 together coordinate (6S)-5-methyl-5,6,7,8-tetrahydrofolate. 202–203 provides a ligand contact to methylcob(III)alamin; that stretch reads QN. Residues Gly-222 and Asp-224 each contribute to the Ca(2+) site.

This sequence belongs to the vitamin-B12 dependent methionine synthase family. Heterohexamer composed of 2 subunits of AcsC, 2 subunits of AcsD and 2 subunits of AcsE. Ca(2+) serves as cofactor.

The catalysed reaction is methyl-Co(III)-[corrinoid Fe-S protein] + (6S)-5,6,7,8-tetrahydrofolate = Co(I)-[corrinoid Fe-S protein] + (6S)-5-methyl-5,6,7,8-tetrahydrofolate + H(+). Its function is as follows. Methyltransferase that mediates the transfer of a N5-methyl group of (6S)-methyltetrahydrofolate to the 5-methoxybenzimidazolylcobamide cofactor of a corrinoid/Fe-S protein (AcsC/AcsD) in the anaerobic acetyl-CoA pathway (Wood-Ljungdahl pathway) of carbon monoxide and carbon dioxide fixation. The chain is 5-methyltetrahydrofolate:corrinoid/iron-sulfur protein co-methyltransferase (acsE) from Moorella thermoacetica (Clostridium thermoaceticum).